The primary structure comprises 821 residues: G-type lectin S-receptor-like serine/threonine-protein kinase SD2-5 (821 aa).

An N-terminal signal peptide occupies residues 1–21; the sequence is MRGVFIVIVTCLVFLPDPLRA. The Extracellular portion of the chain corresponds to 22–429; the sequence is GVASIGSITP…NGEDDGKHFP (408 aa). The Bulb-type lectin domain maps to 33–148; the sequence is FGGSQMNYIN…DGTSIWESFD (116 aa). Residues asparagine 51, asparagine 121, asparagine 174, and asparagine 248 are each glycosylated (N-linked (GlcNAc...) asparagine). The EGF-like; atypical domain maps to 280–314; the sequence is PSDLCGTPEPCGPYYVCSGSKVCGCVSGLSRARSD. 2 disulfide bridges follow: cysteine 284/cysteine 296 and cysteine 290/cysteine 302. Residues 323–411 form the PAN domain; it reads CKKTKDNATL…SGFVSYIKIA (89 aa). Residues asparagine 329, asparagine 370, and asparagine 380 are each glycosylated (N-linked (GlcNAc...) asparagine). Cystine bridges form between cysteine 363/cysteine 385 and cysteine 367/cysteine 373. The helical transmembrane segment at 430 to 450 threads the bilayer; the sequence is YVVIIVVVTVFIIAVLIFVAF. Residues 451–821 lie on the Cytoplasmic side of the membrane; it reads RIHKRKKMIL…LSAVRLSGPR (371 aa). The Protein kinase domain occupies 493 to 768; it reads NNFSVKLGQG…KVVQMLEGVF (276 aa). ATP is bound by residues 499–507 and lysine 521; that span reads LGQGGFGSV. Residues 581 to 599 are caM-binding; the sequence is KDGDVLLDWDTRFNIALGT. Catalysis depends on aspartate 618, which acts as the Proton acceptor. Serine 635 is modified (phosphoserine). A Phosphothreonine modification is found at threonine 652.

Belongs to the protein kinase superfamily. Ser/Thr protein kinase family. In terms of assembly, interacts with PUB9, PUB13, PUB14 and PUB29.

It localises to the membrane. The catalysed reaction is L-seryl-[protein] + ATP = O-phospho-L-seryl-[protein] + ADP + H(+). It carries out the reaction L-threonyl-[protein] + ATP = O-phospho-L-threonyl-[protein] + ADP + H(+). The polypeptide is G-type lectin S-receptor-like serine/threonine-protein kinase SD2-5 (SD25) (Arabidopsis thaliana (Mouse-ear cress)).